The sequence spans 327 residues: Alkene monooxygenase system, ferredoxin--NAD(+) reductase component (327 aa).

The 89-residue stretch at 1 to 89 folds into the 2Fe-2S ferredoxin-type domain; it reads MRLNDGRSFS…DLEINVRAGD (89 aa). [2Fe-2S] cluster is bound by residues C32, C37, C40, and C73. The FAD-binding FR-type domain occupies 96–194; that stretch reads PRRHAARVTV…EGPYGRAYLR (99 aa).

Belongs to the bacterial ring-hydroxylating dioxygenase ferredoxin reductase family. Monomer. The alkene monooxygenase multicomponent enzyme system is composed of an electron transfer component and a monooxygenase component interacting with the effector protein XamoD. The electron transfer component is composed of a ferredoxin reductase (XamoF) and a ferredoxin (XamoC), and the monooxygenase component is formed by a heterohexamer (dimer of heterotrimers) of two alpha subunits (XamoA), two beta subunits (XamoE) and two gamma subunits (XamoB). It depends on FAD as a cofactor. [2Fe-2S] cluster is required as a cofactor.

The protein localises to the cytoplasm. The catalysed reaction is 2 reduced [2Fe-2S]-[ferredoxin] + NAD(+) + H(+) = 2 oxidized [2Fe-2S]-[ferredoxin] + NADH. Functionally, reductase component of the alkene monooxygenase multicomponent enzyme system which catalyzes the O2- and NADH-dependent epoxidation of short chain (C2 to C6) alkenes to their corresponding epoxides. Ferredoxin reductase catalyzes the transfer of electrons from NADH to ferredoxin (XamoC). NADPH is also effective but with a rate approximately 3-fold lower than with NADH. This Xanthobacter autotrophicus (strain ATCC BAA-1158 / Py2) protein is Alkene monooxygenase system, ferredoxin--NAD(+) reductase component.